A 120-amino-acid polypeptide reads, in one-letter code: Acylphosphatase-1 (120 aa).

Ala2 bears the N-acetylalanine mark. In terms of domain architecture, Acylphosphatase-like spans 8–98 (SCEFEVFGRV…YGYANFHIKP (91 aa)). Catalysis depends on residues Arg23 and Asn41. The tract at residues 91-120 (YANFHIKPDPHENRPVHEGLGSSSSHHDSN) is disordered. The span at 96-107 (IKPDPHENRPVH) shows a compositional bias: basic and acidic residues.

This sequence belongs to the acylphosphatase family.

The protein localises to the cytoplasm. It catalyses the reaction an acyl phosphate + H2O = a carboxylate + phosphate + H(+). The polypeptide is Acylphosphatase-1 (Acyp) (Drosophila melanogaster (Fruit fly)).